Consider the following 248-residue polypeptide: Probable transcriptional regulatory protein Mpop_0922 (248 aa).

It belongs to the TACO1 family.

The protein localises to the cytoplasm. The protein is Probable transcriptional regulatory protein Mpop_0922 of Methylorubrum populi (strain ATCC BAA-705 / NCIMB 13946 / BJ001) (Methylobacterium populi).